The following is a 1037-amino-acid chain: Outer dynein arm-docking complex subunit 2 (1037 aa).

Basic and acidic residues-rich tracts occupy residues 316–334 (EEQQKDNQIFEKPKTEDGH) and 376–391 (SSIKDSQEEKQGKLEK). Disordered regions lie at residues 316-353 (EEQQKDNQIFEKPKTEDGHSSVAGSEKSKIEKISFGKS) and 376-439 (SSIK…ANAD). ARM repeat units follow at residues 477 to 516 (ETCQLAIRDVGGLEVLINLLDTDEVKCKIGSLKILKEISH), 518 to 557 (PQIRRNIVDLGGLPIMVNILDSPHKSLKCLSAETIANVAK), 528 to 570 (GGLP…QHGG), 615 to 654 (HSNKEAIRKAGGIPLLARLLKTSHENMLIPVVGTLQECAS), 656 to 695 (ENYRAAIKAERIIENLVKNLNSENEQLQEHCAMAIYQCAE), 739 to 778 (KENVIKFREYKAIETLVGLLTDQPEEVLVNVVGALGECCQ), 821 to 860 (PESMAIIDRLDGVRLLWSLLKNPHPDVKASAAWALCPCIE), 864 to 903 (DAGEMVRSFVGGLELVVNLLKSDNKEVLASVCAAITNIAK), 905 to 944 (QENLAVITDHGVVPLLSKLANTNNDKLRRHLAEAISRCCM), and 946 to 985 (GRNRVAFGEHKAVAPLVRYLKSNDTNVHRATAQALYQLSE). The residue at position 545 (K545) is an N6-methyllysine.

In terms of assembly, component of the outer dynein arm-docking complex along with ODAD1, ODAD3, and ODAD4. Interacts with CFAP61. In terms of tissue distribution, highly expressed in testis. In males, also detected at lower levels in lung, brain, liver and muscle. In females, detected in ovary.

The protein resides in the cytoplasm. Its subcellular location is the cytoskeleton. It localises to the cilium axoneme. It is found in the cilium basal body. Component of the outer dynein arm-docking complex (ODA-DC) that mediates outer dynein arms (ODA) binding onto the doublet microtubule. Involved in mediating assembly of both ODAs and their axonemal docking complex onto ciliary microtubules. The chain is Outer dynein arm-docking complex subunit 2 from Mus musculus (Mouse).